Here is a 707-residue protein sequence, read N- to C-terminus: GDNF-inducible zinc finger protein 1 (707 aa).

One can recognise a BTB domain in the interval 31 to 103 (CDVTVIVDYQ…VYTARVRVKE (73 aa)). Over residues 149-165 (VEASSGPQVSVTPSSKA) the composition is skewed to polar residues. Disordered regions lie at residues 149–221 (VEAS…PKIR) and 243–309 (RRLR…KDGE). Composition is skewed to basic and acidic residues over residues 198-213 (PSKK…KDVA), 243-278 (RRLR…EPAS), and 287-298 (VEREESLQKVEG). 10 consecutive C2H2-type zinc fingers follow at residues 316–338 (FQCT…IKYH), 347–370 (YRCD…RHVH), 376–399 (FPCE…LQVH), 406–428 (HRCG…ERTH), 434–456 (YGCT…LRVH), 462–484 (FVCD…KRCH), 490–512 (FMCE…NRIH), 518–540 (FKCE…IKVH), 546–568 (YCCD…HRIH), and 574–596 (YMCN…TSIH). Serine 612 bears the Phosphoserine mark.

It belongs to the krueppel C2H2-type zinc-finger protein family. As to quaternary structure, interacts with NCL.

It localises to the cytoplasm. Its subcellular location is the nucleus. The protein resides in the nucleoplasm. It is found in the nucleolus. In terms of biological role, transcriptional repressor that binds the GZF1 responsive element (GRE) (consensus: 5'-TGCGCN[TG][CA]TATA-3'). May be regulating VSX2/HOX10 expression. This Rattus norvegicus (Rat) protein is GDNF-inducible zinc finger protein 1 (Gzf1).